The sequence spans 255 residues: Cyclase-like protein 1 (255 aa).

A signal peptide spans 1-24; it reads MTRSVSFPLFLFAVVLSLSSSLLA.

It belongs to the Cyclase 1 superfamily.

Its subcellular location is the secreted. It localises to the extracellular space. The protein localises to the extracellular matrix. Acts as a negative regulator of fumonisin B1- and pathogen-induced programmed cell death (PCD), and regulates pathogen-induced symptom development. May function redundantly with CYCLASE2 for normal plant growth, development and viability. The protein is Cyclase-like protein 1 of Arabidopsis thaliana (Mouse-ear cress).